Here is a 276-residue protein sequence, read N- to C-terminus: 2-dehydro-3-deoxyphosphooctonate aldolase (276 aa).

This sequence belongs to the KdsA family.

The protein localises to the cytoplasm. The catalysed reaction is D-arabinose 5-phosphate + phosphoenolpyruvate + H2O = 3-deoxy-alpha-D-manno-2-octulosonate-8-phosphate + phosphate. It functions in the pathway carbohydrate biosynthesis; 3-deoxy-D-manno-octulosonate biosynthesis; 3-deoxy-D-manno-octulosonate from D-ribulose 5-phosphate: step 2/3. The protein operates within bacterial outer membrane biogenesis; lipopolysaccharide biosynthesis. This chain is 2-dehydro-3-deoxyphosphooctonate aldolase, found in Xanthomonas campestris pv. campestris (strain 8004).